Consider the following 248-residue polypeptide: ATP synthase subunit a, chloroplastic (248 aa).

Transmembrane regions (helical) follow at residues 35-55, 94-114, 133-153, 202-222, and 224-244; these read GQVF…SFLG, VPYI…GALI, INTT…AGLS, VFTL…GLFA, and SIQA…AMEG.

Belongs to the ATPase A chain family. In terms of assembly, F-type ATPases have 2 components, CF(1) - the catalytic core - and CF(0) - the membrane proton channel. CF(1) has five subunits: alpha(3), beta(3), gamma(1), delta(1), epsilon(1). CF(0) has four main subunits: a, b, b' and c.

Its subcellular location is the plastid. The protein localises to the chloroplast thylakoid membrane. Key component of the proton channel; it plays a direct role in the translocation of protons across the membrane. The sequence is that of ATP synthase subunit a, chloroplastic from Pyropia yezoensis (Susabi-nori).